The following is a 115-amino-acid chain: Anamorsin homolog 2 (115 aa).

A disordered region spans residues 30–115 (VKEATKGEDC…KVKLNLTDDI (86 aa)). C39, C46, C49, and C51 together coordinate [2Fe-2S] cluster. The interval 39-51 (CTTRRRACKNCTC) is fe-S binding site A. Residues C77, C80, C88, and C91 each coordinate [4Fe-4S] cluster. Short sequence motifs (cx2C motif) lie at residues 77 to 80 (CGNC) and 88 to 91 (CATC). The interval 77–91 (CGNCAKGDAFRCATC) is fe-S binding site B.

The protein belongs to the anamorsin family. In terms of assembly, monomer. [2Fe-2S] cluster serves as cofactor. [4Fe-4S] cluster is required as a cofactor.

It localises to the cytoplasm. Its subcellular location is the mitochondrion intermembrane space. Its function is as follows. Component of the cytosolic iron-sulfur (Fe-S) protein assembly (CIA) machinery. Required for the maturation of extramitochondrial Fe-S proteins. Part of an electron transfer chain functioning in an early step of cytosolic Fe-S biogenesis, facilitating the de novo assembly of a [4Fe-4S] cluster on the cytosolic Fe-S scaffold complex. Electrons are transferred from NADPH via a FAD- and FMN-containing diflavin oxidoreductase. Together with the diflavin oxidoreductase, also required for the assembly of the diferric tyrosyl radical cofactor of ribonucleotide reductase (RNR), probably by providing electrons for reduction during radical cofactor maturation in the catalytic small subunit. This is Anamorsin homolog 2 from Trypanosoma cruzi (strain CL Brener).